The primary structure comprises 404 residues: Exodeoxyribonuclease 7 large subunit (404 aa).

The protein belongs to the XseA family. Heterooligomer composed of large and small subunits.

It localises to the cytoplasm. The catalysed reaction is Exonucleolytic cleavage in either 5'- to 3'- or 3'- to 5'-direction to yield nucleoside 5'-phosphates.. Bidirectionally degrades single-stranded DNA into large acid-insoluble oligonucleotides, which are then degraded further into small acid-soluble oligonucleotides. This is Exodeoxyribonuclease 7 large subunit from Tropheryma whipplei (strain TW08/27) (Whipple's bacillus).